A 709-amino-acid polypeptide reads, in one-letter code: Eukaryotic translation initiation factor 3 subunit B (709 aa).

A sufficient for interaction with HCR1 and TIF32 region spans residues 1 to 98 (MSINEEEYLR…LFIQYKNVAD (98 aa)). The tract at residues 1 to 221 (MSINEEEYLR…GIQAWGGADF (221 aa)) is sufficient for interaction with PIC8. The RRM domain maps to 37–124 (NYVIVDGAPI…HRLLVNRLSD (88 aa)).

It belongs to the eIF-3 subunit B family. Component of the eukaryotic translation initiation factor 3 (eIF-3) complex.

The protein resides in the cytoplasm. Functionally, RNA-binding component of the eukaryotic translation initiation factor 3 (eIF-3) complex, which is involved in protein synthesis of a specialized repertoire of mRNAs and, together with other initiation factors, stimulates binding of mRNA and methionyl-tRNAi to the 40S ribosome. The eIF-3 complex specifically targets and initiates translation of a subset of mRNAs involved in cell proliferation. The sequence is that of Eukaryotic translation initiation factor 3 subunit B from Lodderomyces elongisporus (strain ATCC 11503 / CBS 2605 / JCM 1781 / NBRC 1676 / NRRL YB-4239) (Yeast).